A 587-amino-acid chain; its full sequence is ATF/CREB activator 2 (587 aa).

4 disordered regions span residues 1 to 62, 123 to 144, 169 to 195, and 381 to 423; these read MFTG…SRSL, LRQQQQQDQRQQSPSMKTEEES, NLSQLSSTRKSAPNDSTTAPTNASNIA, and TGGE…IPGT. A compositionally biased stretch (basic and acidic residues) spans 16–29; it reads KQKDNNKRGIDDTS. Low complexity-rich tracts occupy residues 39-57 and 123-134; these read SVSDTSAAATTTSTMNNSA and LRQQQQQDQRQQ. A phosphoserine mark is found at Ser171 and Ser179. A compositionally biased stretch (basic and acidic residues) spans 385–395; it reads NRGKSALRESH. Over residues 396–418 the composition is skewed to polar residues; the sequence is SNPSFTPKSQGSHLNLAANTQGN. Position 399 is a phosphoserine (Ser399). The 64-residue stretch at 425–488 folds into the bZIP domain; sequence AWKRARLLER…SKFKKFSKIH (64 aa). A basic motif region spans residues 427-447; the sequence is KRARLLERNRIAASKCRQRKK. The leucine-zipper stretch occupies residues 453 to 467; it reads LQKEFNEIKDENRIL. The interval 552–587 is disordered; the sequence is SQRFGSDTDDDDIDLKPVEGGKDPDNQSLPNSEKIK. Ser557 carries the phosphoserine modification. The residue at position 559 (Thr559) is a Phosphothreonine. The span at 565–576 shows a compositional bias: basic and acidic residues; that stretch reads DLKPVEGGKDPD. Positions 577–587 are enriched in polar residues; the sequence is NQSLPNSEKIK.

Belongs to the bZIP family.

It is found in the nucleus. Transcriptional activator of promoters containing ATF/CREB sites. Can independently stimulate transcription through ATF/CREB sites. Important for a variety of biological functions including growth on non-optimal carbon sources. This is ATF/CREB activator 2 (CST6) from Saccharomyces cerevisiae (strain ATCC 204508 / S288c) (Baker's yeast).